The following is a 410-amino-acid chain: F-box protein At3g19890 (410 aa).

The F-box domain occupies 2-49; the sequence is TMISDLSKDLVEEILSKAPITSLGAVRSTHKQWNALSKGRLLYKAEAK. The segment at 386 to 410 is disordered; the sequence is EDKCKSIKMVDTKRQRKKRKRKSKR. A compositionally biased stretch (basic and acidic residues) spans 387–398; it reads DKCKSIKMVDTK. Over residues 399–410 the composition is skewed to basic residues; sequence RQRKKRKRKSKR.

The sequence is that of F-box protein At3g19890 from Arabidopsis thaliana (Mouse-ear cress).